The chain runs to 314 residues: Homoserine O-succinyltransferase (314 aa).

Cys-142 serves as the catalytic Acyl-thioester intermediate. Lys-163 and Ser-192 together coordinate substrate. Residue His-235 is the Proton acceptor of the active site. Glu-237 is an active-site residue. Substrate is bound at residue Arg-249.

This sequence belongs to the MetA family.

The protein localises to the cytoplasm. It carries out the reaction L-homoserine + succinyl-CoA = O-succinyl-L-homoserine + CoA. It participates in amino-acid biosynthesis; L-methionine biosynthesis via de novo pathway; O-succinyl-L-homoserine from L-homoserine: step 1/1. Transfers a succinyl group from succinyl-CoA to L-homoserine, forming succinyl-L-homoserine. The sequence is that of Homoserine O-succinyltransferase from Shewanella woodyi (strain ATCC 51908 / MS32).